Here is an 809-residue protein sequence, read N- to C-terminus: Acyl-homoserine lactone acylase QuiP (809 aa).

The first 26 residues, 1–26 (MASPAFSHFLPRFGVAAAVASALSLA), serve as a signal peptide directing secretion. The active-site Nucleophile is Ser261.

Belongs to the peptidase S45 family. In terms of assembly, heterodimer of an alpha subunit and a beta subunit processed from the same precursor.

It is found in the periplasm. The enzyme catalyses an N-acyl-L-homoserine lactone + H2O = L-homoserine lactone + a carboxylate. In terms of biological role, catalyzes the deacylation of acyl-homoserine lactone (AHL or acyl-HSL), releasing homoserine lactone (HSL) and the corresponding fatty acid. Possesses a specificity for the degradation of long-chain acyl-HSLs (side chains of seven or more carbons in length). The protein is Acyl-homoserine lactone acylase QuiP (quiP) of Pseudomonas fluorescens (strain ATCC BAA-477 / NRRL B-23932 / Pf-5).